Reading from the N-terminus, the 66-residue chain is Photosystem II reaction center protein J (66 aa).

The disordered stretch occupies residues 1 to 27 (MSGKKSGLPDGRVPDRNPDGTPAVPWK). A helical transmembrane segment spans residues 37–57 (LWLVATAGGMAVMFVVGLFFY).

This sequence belongs to the PsbJ family. PSII is composed of 1 copy each of membrane proteins PsbA, PsbB, PsbC, PsbD, PsbE, PsbF, PsbH, PsbI, PsbJ, PsbK, PsbL, PsbM, PsbT, PsbX, PsbY, PsbZ, Psb30/Ycf12, peripheral proteins PsbO, CyanoQ (PsbQ), PsbU, PsbV and a large number of cofactors. It forms dimeric complexes.

Its subcellular location is the cellular thylakoid membrane. Functionally, one of the components of the core complex of photosystem II (PSII). PSII is a light-driven water:plastoquinone oxidoreductase that uses light energy to abstract electrons from H(2)O, generating O(2) and a proton gradient subsequently used for ATP formation. It consists of a core antenna complex that captures photons, and an electron transfer chain that converts photonic excitation into a charge separation. The chain is Photosystem II reaction center protein J from Synechococcus sp. (strain RCC307).